A 747-amino-acid polypeptide reads, in one-letter code: Transcription factor phm2 (747 aa).

Positions 21-50 (CNACRKRKRVRCDRLHPCSNCASRGLGSTC) form a DNA-binding region, zn(2)-C6 fungal-type. Disordered stretches follow at residues 112–150 (GLQNQGSDARSDARCQPTPLSSETEFEYPVAPSPSDHGS) and 414–436 (TAEPRNLYDTDFDEDSSALPESR).

It localises to the nucleus. Functionally, transcription factor that regulates the expression of the gene cluster that mediates the biosynthesis of the trans-fused decalin-containing tetramic acid phomasetin. This chain is Transcription factor phm2, found in Pyrenochaetopsis sp.